The chain runs to 341 residues: NADH-ubiquinone oxidoreductase chain 2 (341 aa).

9 helical membrane passes run 8–28 (ILFI…NSWL), 60–80 (YFLT…LLML), 95–115 (MIIM…FWFP), 121–141 (LTWM…LMLI), 146–166 (IKYL…IGGL), 195–215 (SIWL…TFMF), 238–258 (FTLF…GFLP), 273–293 (FMLT…LRIC), and 321–341 (MIMT…YFMF).

This sequence belongs to the complex I subunit 2 family.

The protein resides in the mitochondrion inner membrane. It catalyses the reaction a ubiquinone + NADH + 5 H(+)(in) = a ubiquinol + NAD(+) + 4 H(+)(out). In terms of biological role, core subunit of the mitochondrial membrane respiratory chain NADH dehydrogenase (Complex I) that is believed to belong to the minimal assembly required for catalysis. Complex I functions in the transfer of electrons from NADH to the respiratory chain. The immediate electron acceptor for the enzyme is believed to be ubiquinone. This chain is NADH-ubiquinone oxidoreductase chain 2 (mt:ND2), found in Drosophila melanogaster (Fruit fly).